A 212-amino-acid chain; its full sequence is NAD(P)H dehydrogenase (quinone) 3 (212 aa).

In terms of domain architecture, Flavodoxin-like spans M4–V192. FMN contacts are provided by residues S10–I15 and T78–F80. Y12 is an NAD(+) binding site. W98 is a substrate binding site. Residues S113–G119 and H134 contribute to the FMN site. The tract at residues Y161–L182 is disordered.

It belongs to the WrbA family. FMN is required as a cofactor.

It catalyses the reaction a quinone + NADH + H(+) = a quinol + NAD(+). The catalysed reaction is a quinone + NADPH + H(+) = a quinol + NADP(+). In Rhizobium meliloti (strain 1021) (Ensifer meliloti), this protein is NAD(P)H dehydrogenase (quinone) 3.